The sequence spans 96 residues: Signal recognition particle 19 kDa protein (96 aa).

It belongs to the SRP19 family. In terms of assembly, part of the signal recognition particle protein translocation system, which is composed of SRP and FtsY. Archaeal SRP consists of a 7S RNA molecule of 300 nucleotides and two protein subunits: SRP54 and SRP19.

It is found in the cytoplasm. Its function is as follows. Involved in targeting and insertion of nascent membrane proteins into the cytoplasmic membrane. Binds directly to 7S RNA and mediates binding of the 54 kDa subunit of the SRP. This chain is Signal recognition particle 19 kDa protein, found in Pyrobaculum arsenaticum (strain DSM 13514 / JCM 11321 / PZ6).